A 262-amino-acid polypeptide reads, in one-letter code: tRNA U34 carboxymethyltransferase (262 aa).

Carboxy-S-adenosyl-L-methionine contacts are provided by residues Lys25, Trp39, Lys44, Gly63, Val114–Glu115, Tyr135, and Arg250.

The protein belongs to the class I-like SAM-binding methyltransferase superfamily. CmoB family. Homotetramer.

The enzyme catalyses carboxy-S-adenosyl-L-methionine + 5-hydroxyuridine(34) in tRNA = 5-carboxymethoxyuridine(34) in tRNA + S-adenosyl-L-homocysteine + H(+). In terms of biological role, catalyzes carboxymethyl transfer from carboxy-S-adenosyl-L-methionine (Cx-SAM) to 5-hydroxyuridine (ho5U) to form 5-carboxymethoxyuridine (cmo5U) at position 34 in tRNAs. This Helicobacter acinonychis (strain Sheeba) protein is tRNA U34 carboxymethyltransferase.